Reading from the N-terminus, the 303-residue chain is Protoheme IX farnesyltransferase (303 aa).

Transmembrane regions (helical) follow at residues 25 to 45 (MGLVQGNLIPAFAGSWLAIVL), 54 to 74 (IPQILLMLIGSTLIMGGACAL), 104 to 124 (LLILSFGMMVIGEIALFILNI), 125 to 145 (PSGVIGLMGIIGYVSFYSIWS), 151 to 171 (WNTVIGAFPGAVPPVIGWTAI), 179 to 199 (AIALFLVIFCWQPIHFYALAI), 228 to 248 (VWLILLLPLPFLLSDLGPVFI), and 280 to 300 (FVYSLNYLVLFFALVVIISLI).

This sequence belongs to the UbiA prenyltransferase family. Protoheme IX farnesyltransferase subfamily. In terms of assembly, interacts with CtaA.

It localises to the cell membrane. It catalyses the reaction heme b + (2E,6E)-farnesyl diphosphate + H2O = Fe(II)-heme o + diphosphate. It participates in porphyrin-containing compound metabolism; heme O biosynthesis; heme O from protoheme: step 1/1. Converts heme B (protoheme IX) to heme O by substitution of the vinyl group on carbon 2 of heme B porphyrin ring with a hydroxyethyl farnesyl side group. This is Protoheme IX farnesyltransferase from Staphylococcus carnosus (strain TM300).